We begin with the raw amino-acid sequence, 342 residues long: Ketol-acid reductoisomerase (NADP(+)) (342 aa).

A KARI N-terminal Rossmann domain is found at 2–181 (VKVYYNGDIQ…GGARAGVLET (180 aa)). NADP(+)-binding positions include 25 to 28 (YGSQ), arginine 48, serine 52, and 82 to 85 (DEQQ). Histidine 107 is an active-site residue. Glycine 133 contributes to the NADP(+) binding site. Positions 182–327 (TFKEETETDL…RKLREMMPFV (146 aa)) constitute a KARI C-terminal knotted domain. Aspartate 190, glutamate 194, glutamate 226, and glutamate 230 together coordinate Mg(2+). A substrate-binding site is contributed by serine 251.

It belongs to the ketol-acid reductoisomerase family. Mg(2+) serves as cofactor.

It carries out the reaction (2R)-2,3-dihydroxy-3-methylbutanoate + NADP(+) = (2S)-2-acetolactate + NADPH + H(+). The catalysed reaction is (2R,3R)-2,3-dihydroxy-3-methylpentanoate + NADP(+) = (S)-2-ethyl-2-hydroxy-3-oxobutanoate + NADPH + H(+). Its pathway is amino-acid biosynthesis; L-isoleucine biosynthesis; L-isoleucine from 2-oxobutanoate: step 2/4. It functions in the pathway amino-acid biosynthesis; L-valine biosynthesis; L-valine from pyruvate: step 2/4. Involved in the biosynthesis of branched-chain amino acids (BCAA). Catalyzes an alkyl-migration followed by a ketol-acid reduction of (S)-2-acetolactate (S2AL) to yield (R)-2,3-dihydroxy-isovalerate. In the isomerase reaction, S2AL is rearranged via a Mg-dependent methyl migration to produce 3-hydroxy-3-methyl-2-ketobutyrate (HMKB). In the reductase reaction, this 2-ketoacid undergoes a metal-dependent reduction by NADPH to yield (R)-2,3-dihydroxy-isovalerate. In Bacillus pumilus (strain SAFR-032), this protein is Ketol-acid reductoisomerase (NADP(+)).